The sequence spans 368 residues: (3S,6E)-nerolidol synthase (368 aa).

Residues D91, N228, and S232 each coordinate Mg(2+). Positions 91–95 (DDLLE) match the DDXXE motif motif.

Belongs to the terpene synthase family. Mg(2+) is required as a cofactor. Requires Mn(2+) as cofactor.

It carries out the reaction (2E,6E)-farnesyl diphosphate + H2O = (3S,6E)-nerolidol + diphosphate. The enzyme catalyses (2E)-geranyl diphosphate + H2O = (S)-linalool + diphosphate. The protein operates within secondary metabolite biosynthesis; terpenoid biosynthesis. Sesquiterpene synthase converting farnesyl diphosphate to nerolidol. Also has a monoterpene synthase activity, converting geranyl diphosphate into linalool as the major product. Has no diterpene synthase activity. The sequence is that of (3S,6E)-nerolidol synthase from Selaginella moellendorffii (Spikemoss).